Reading from the N-terminus, the 81-residue chain is Costars family protein ABRACL (81 aa).

This sequence belongs to the costars family.

The polypeptide is Costars family protein ABRACL (Salmo salar (Atlantic salmon)).